We begin with the raw amino-acid sequence, 550 residues long: Dihydroxy-acid dehydratase (550 aa).

Mg(2+) is bound at residue Asp78. Residue Cys119 participates in [2Fe-2S] cluster binding. Positions 120 and 121 each coordinate Mg(2+). Lys121 is subject to N6-carboxylysine. Cys191 is a binding site for [2Fe-2S] cluster. Glu440 contributes to the Mg(2+) binding site. Ser466 (proton acceptor) is an active-site residue.

Belongs to the IlvD/Edd family. Homodimer. [2Fe-2S] cluster serves as cofactor. Mg(2+) is required as a cofactor.

It carries out the reaction (2R)-2,3-dihydroxy-3-methylbutanoate = 3-methyl-2-oxobutanoate + H2O. The catalysed reaction is (2R,3R)-2,3-dihydroxy-3-methylpentanoate = (S)-3-methyl-2-oxopentanoate + H2O. Its pathway is amino-acid biosynthesis; L-isoleucine biosynthesis; L-isoleucine from 2-oxobutanoate: step 3/4. It functions in the pathway amino-acid biosynthesis; L-valine biosynthesis; L-valine from pyruvate: step 3/4. Its function is as follows. Functions in the biosynthesis of branched-chain amino acids. Catalyzes the dehydration of (2R,3R)-2,3-dihydroxy-3-methylpentanoate (2,3-dihydroxy-3-methylvalerate) into 2-oxo-3-methylpentanoate (2-oxo-3-methylvalerate) and of (2R)-2,3-dihydroxy-3-methylbutanoate (2,3-dihydroxyisovalerate) into 2-oxo-3-methylbutanoate (2-oxoisovalerate), the penultimate precursor to L-isoleucine and L-valine, respectively. The chain is Dihydroxy-acid dehydratase from Methanococcus maripaludis (strain C5 / ATCC BAA-1333).